Here is a 25-residue protein sequence, read N- to C-terminus: Chitinolytic alpha-amylase inhibitor PvCAI (25 aa).

In terms of assembly, homodimer.

The enzyme catalyses Random endo-hydrolysis of N-acetyl-beta-D-glucosaminide (1-&gt;4)-beta-linkages in chitin and chitodextrins.. Its function is as follows. Alpha-amylase inhibitor, active against Z.subfasciatus alpha-amylase (ZSA) but not porcine pancreatic alpha-amylase (PPA). Has chitinase activity. In Phaseolus vulgaris (Kidney bean), this protein is Chitinolytic alpha-amylase inhibitor PvCAI.